Here is a 326-residue protein sequence, read N- to C-terminus: Ribonuclease Z (326 aa).

H62, H64, D66, H67, H140, D211, and H269 together coordinate Zn(2+). D66 (proton acceptor) is an active-site residue.

It belongs to the RNase Z family. As to quaternary structure, homodimer. Zn(2+) is required as a cofactor.

It carries out the reaction Endonucleolytic cleavage of RNA, removing extra 3' nucleotides from tRNA precursor, generating 3' termini of tRNAs. A 3'-hydroxy group is left at the tRNA terminus and a 5'-phosphoryl group is left at the trailer molecule.. Zinc phosphodiesterase, which displays some tRNA 3'-processing endonuclease activity. Probably involved in tRNA maturation, by removing a 3'-trailer from precursor tRNA. In Synechocystis sp. (strain ATCC 27184 / PCC 6803 / Kazusa), this protein is Ribonuclease Z.